The following is a 55-amino-acid chain: Cop-6 protein (55 aa).

Belongs to the transcriptional regulatory CopG/NikR family.

Its function is as follows. Acts in trans as a negative regulatory element in pE194 replication. The chain is Cop-6 protein from Staphylococcus aureus.